The sequence spans 200 residues: Riboflavin synthase (200 aa).

2 Lumazine-binding repeats span residues 1–97 (MFSG…IGGH) and 98–190 (LLSG…VDTV). 2,4-dihydroxypteridine is bound by residues 4–6 (GII), 48–50 (CLT), 62–67 (DVIPET), 101–103 (GHV), Lys132, 141–143 (SLT), and 155–160 (GLIPET).

Homotrimer.

It carries out the reaction 2 6,7-dimethyl-8-(1-D-ribityl)lumazine + H(+) = 5-amino-6-(D-ribitylamino)uracil + riboflavin. The protein operates within cofactor biosynthesis; riboflavin biosynthesis; riboflavin from 2-hydroxy-3-oxobutyl phosphate and 5-amino-6-(D-ribitylamino)uracil: step 2/2. Catalyzes the dismutation of two molecules of 6,7-dimethyl-8-ribityllumazine, resulting in the formation of riboflavin and 5-amino-6-(D-ribitylamino)uracil. The chain is Riboflavin synthase (ribE) from Chlamydia pneumoniae (Chlamydophila pneumoniae).